A 282-amino-acid chain; its full sequence is Probable iron transport system membrane protein HI_0360 (282 aa).

A run of 8 helical transmembrane segments spans residues 17 to 37, 63 to 83, 93 to 113, 140 to 160, 164 to 184, 186 to 206, 223 to 243, and 245 to 265; these read AMILSTAVGGICAFLSSYLML, LPYALGAFFAGILAALSILWI, AVIGFIFSTFFALGLLIVSLN, IIIGVCLVLLLLFWKDLLLIF, TQAITVGLSPLFYKILFFTLL, ACVVAALQTVGAILVIAMVVT, IIAIILGAVTSFVGVYISYYL, and GATGGVIVTLQTLLFLVAFLF.

This sequence belongs to the ABC-3 integral membrane protein family.

Its subcellular location is the cell inner membrane. In terms of biological role, part of an ATP-driven transport system HI_0359/HI_0360/HI_0361/HI_0362 for iron. The polypeptide is Probable iron transport system membrane protein HI_0360 (Haemophilus influenzae (strain ATCC 51907 / DSM 11121 / KW20 / Rd)).